The chain runs to 201 residues: MITSIATTTAGAFEVKSLGFIPYPSQPKRIFFMAQVIFRILAIAFAVASISAMVTSDQNVIVFGMDTAARYSYSSAFRFLVGANAVVCGFSVLSLIFVCLMSRRSEAILEKNYYLFLHDMVMMVMMVSGCSAATAIGYVGRYGEKEITWTAVCDFVGKFCNQALVSIVLAYLALFCYVALTTLAAHKLNHSSSTAAIRQNE.

The Cytoplasmic segment spans residues 1 to 29; sequence MITSIATTTAGAFEVKSLGFIPYPSQPKR. The helical transmembrane segment at 30–50 threads the bilayer; it reads IFFMAQVIFRILAIAFAVASI. The Extracellular portion of the chain corresponds to 51-78; it reads SAMVTSDQNVIVFGMDTAARYSYSSAFR. The helical transmembrane segment at 79 to 99 threads the bilayer; the sequence is FLVGANAVVCGFSVLSLIFVC. Topologically, residues 100–119 are cytoplasmic; sequence LMSRRSEAILEKNYYLFLHD. A helical transmembrane segment spans residues 120-140; the sequence is MVMMVMMVSGCSAATAIGYVG. Over 141 to 162 the chain is Extracellular; the sequence is RYGEKEITWTAVCDFVGKFCNQ. A helical transmembrane segment spans residues 163–183; it reads ALVSIVLAYLALFCYVALTTL. Residues 184–201 lie on the Cytoplasmic side of the membrane; that stretch reads AAHKLNHSSSTAAIRQNE.

It belongs to the Casparian strip membrane proteins (CASP) family. Homodimer and heterodimers.

Its subcellular location is the cell membrane. The sequence is that of CASP-like protein 1F2 from Ricinus communis (Castor bean).